The chain runs to 345 residues: Uroporphyrinogen decarboxylase (345 aa).

Residues 24-28 (RQAGR), D74, Y150, S205, and H318 each bind substrate.

This sequence belongs to the uroporphyrinogen decarboxylase family. In terms of assembly, homodimer.

It localises to the cytoplasm. It catalyses the reaction uroporphyrinogen III + 4 H(+) = coproporphyrinogen III + 4 CO2. Its pathway is porphyrin-containing compound metabolism; protoporphyrin-IX biosynthesis; coproporphyrinogen-III from 5-aminolevulinate: step 4/4. Its function is as follows. Catalyzes the decarboxylation of four acetate groups of uroporphyrinogen-III to yield coproporphyrinogen-III. This chain is Uroporphyrinogen decarboxylase, found in Dichelobacter nodosus (strain VCS1703A).